Consider the following 238-residue polypeptide: 7-cyano-7-deazaguanine synthase (238 aa).

10-20 (LSGGLDSSTVL) is a binding site for ATP. Residues cysteine 190, cysteine 198, cysteine 201, and cysteine 204 each contribute to the Zn(2+) site.

It belongs to the QueC family. Requires Zn(2+) as cofactor.

It carries out the reaction 7-carboxy-7-deazaguanine + NH4(+) + ATP = 7-cyano-7-deazaguanine + ADP + phosphate + H2O + H(+). It participates in purine metabolism; 7-cyano-7-deazaguanine biosynthesis. Catalyzes the ATP-dependent conversion of 7-carboxy-7-deazaguanine (CDG) to 7-cyano-7-deazaguanine (preQ(0)). The polypeptide is 7-cyano-7-deazaguanine synthase (Thermoplasma acidophilum (strain ATCC 25905 / DSM 1728 / JCM 9062 / NBRC 15155 / AMRC-C165)).